Here is a 507-residue protein sequence, read N- to C-terminus: Chromosomal replication initiator protein DnaA (507 aa).

The segment at 1–112 (MTDDPGSGFT…PATDEADDTT (112 aa)) is domain I, interacts with DnaA modulators. Residues 99–162 (RIAPPATDEA…ERPRNTDSAT (64 aa)) are disordered. Polar residues predominate over residues 113–127 (VPPSENPATTSPDTT). Residues 113-166 (VPPSENPATTSPDTTTDNDEIDDSAAARGDNQHSWPSYFTERPRNTDSATAGVT) form a domain II region. The segment at 167–383 (SLNRRYTFDT…GALIRVTAFA (217 aa)) is domain III, AAA+ region. Residues Gly211, Gly213, Lys214, and Thr215 each coordinate ATP. Residues 384–507 (SLNKTPIDKA…TTRIRQRSKR (124 aa)) form a domain IV, binds dsDNA region.

Belongs to the DnaA family. Oligomerizes as a right-handed, spiral filament on DNA at oriC.

Its subcellular location is the cytoplasm. Plays an essential role in the initiation and regulation of chromosomal replication. ATP-DnaA binds to the origin of replication (oriC) to initiate formation of the DNA replication initiation complex once per cell cycle. Binds the DnaA box (a 9 base pair repeat at the origin) and separates the double-stranded (ds)DNA. Forms a right-handed helical filament on oriC DNA; dsDNA binds to the exterior of the filament while single-stranded (ss)DNA is stabiized in the filament's interior. The ATP-DnaA-oriC complex binds and stabilizes one strand of the AT-rich DNA unwinding element (DUE), permitting loading of DNA polymerase. After initiation quickly degrades to an ADP-DnaA complex that is not apt for DNA replication. Binds acidic phospholipids. In Mycobacterium bovis (strain BCG / Tokyo 172 / ATCC 35737 / TMC 1019), this protein is Chromosomal replication initiator protein DnaA.